The following is a 436-amino-acid chain: Ribulose bisphosphate carboxylase large chain (436 aa).

2 residues coordinate substrate: asparagine 104 and threonine 154. The active-site Proton acceptor is the lysine 156. Lysine 158 contributes to the substrate binding site. The Mg(2+) site is built by lysine 182, aspartate 184, and glutamate 185. Lysine 182 is subject to N6-carboxylysine. Histidine 275 (proton acceptor) is an active-site residue. Arginine 276, histidine 308, and serine 360 together coordinate substrate.

It belongs to the RuBisCO large chain family. Type I subfamily. In terms of assembly, heterohexadecamer of 8 large chains and 8 small chains. It depends on Mg(2+) as a cofactor.

It is found in the plastid. The protein localises to the chloroplast. The catalysed reaction is 2 (2R)-3-phosphoglycerate + 2 H(+) = D-ribulose 1,5-bisphosphate + CO2 + H2O. The enzyme catalyses D-ribulose 1,5-bisphosphate + O2 = 2-phosphoglycolate + (2R)-3-phosphoglycerate + 2 H(+). RuBisCO catalyzes two reactions: the carboxylation of D-ribulose 1,5-bisphosphate, the primary event in carbon dioxide fixation, as well as the oxidative fragmentation of the pentose substrate in the photorespiration process. Both reactions occur simultaneously and in competition at the same active site. This chain is Ribulose bisphosphate carboxylase large chain, found in Euglena stellata.